Consider the following 627-residue polypeptide: MTFRQPARRTLSGRFGALKCHNGGCSCDSKAMENDILRQSDPEKLHRIRHSTSHILAMAVQKLFPETKVTIGPAIENGFYYDFDRPTPFTPEDLKKIEKEMRRIVQQKLPLVREEVPREAMRERLEALGEPYKLELFEGFDHDAPVSLYRTGDWWDLCAGPHVESTAEIHPNAFKLRSVAGAYWRGDEKRAQLQRIYGTAWETPEQLEEFLRREEEAKKRDHRKLGRELGLFVFSDLVGPGLPLWTPKGALLRYILEEFLRKEQVKRGYQQVVTPHIARVDLFKTSGHWFKYKDDMFPLMATSEEEGAEEGFVMKPMNCPFHIQIYKSELHSYRELPIRLAEFGTVYRYEQSGELGGLTRVRGFTVDDSHLFVTPEQLDDEFKKVVDLIQFVFRSLQLGDGFSARLSFRDPTSDKYIGSDAAWEKAQAAILKASQDLGLKYFVAEGEAAFYGPKLDFIFRDALGREWQLGTVQVDYILPERFELEYVAEDGSRRRPVMIHRAPFGSLERFIAILIEHFAGDFPLWLAPEQVRILPVTDQFVGYAESVKDRLVSLEMRAEVDASSERLGKKIRNGETAKVPVLLVVGESEANSGTVAVRTRVEGEKDKGTLPVEEAIAYLQERLAKRT.

The segment at 221-523 (DHRKLGRELG…LIEHFAGDFP (303 aa)) is catalytic. Zn(2+) contacts are provided by C319, H370, and H500.

Belongs to the class-II aminoacyl-tRNA synthetase family. In terms of assembly, homodimer. The cofactor is Zn(2+).

It is found in the cytoplasm. It catalyses the reaction tRNA(Thr) + L-threonine + ATP = L-threonyl-tRNA(Thr) + AMP + diphosphate + H(+). In terms of biological role, catalyzes the attachment of threonine to tRNA(Thr) in a two-step reaction: L-threonine is first activated by ATP to form Thr-AMP and then transferred to the acceptor end of tRNA(Thr). Also edits incorrectly charged L-seryl-tRNA(Thr). The protein is Threonine--tRNA ligase of Gloeobacter violaceus (strain ATCC 29082 / PCC 7421).